The primary structure comprises 81 residues: Photosystem I iron-sulfur center (81 aa).

4Fe-4S ferredoxin-type domains are found at residues 2–31 (SHTV…MVPW) and 39–68 (IASS…IRVY). 8 residues coordinate [4Fe-4S] cluster: cysteine 11, cysteine 14, cysteine 17, cysteine 21, cysteine 48, cysteine 51, cysteine 54, and cysteine 58.

As to quaternary structure, the cyanobacterial PSI reaction center is composed of one copy each of PsaA,B,C,D,E,F,I,J,K,L,M and X, and forms trimeric complexes. Requires [4Fe-4S] cluster as cofactor.

Its subcellular location is the cellular thylakoid membrane. It catalyses the reaction reduced [plastocyanin] + hnu + oxidized [2Fe-2S]-[ferredoxin] = oxidized [plastocyanin] + reduced [2Fe-2S]-[ferredoxin]. In terms of biological role, apoprotein for the two 4Fe-4S centers FA and FB of photosystem I (PSI); essential for photochemical activity. FB is the terminal electron acceptor of PSI, donating electrons to ferredoxin. The C-terminus interacts with PsaA/B/D and helps assemble the protein into the PSI complex. Required for binding of PsaD and PsaE to PSI. PSI is a plastocyanin/cytochrome c6-ferredoxin oxidoreductase, converting photonic excitation into a charge separation, which transfers an electron from the donor P700 chlorophyll pair to the spectroscopically characterized acceptors A0, A1, FX, FA and FB in turn. This chain is Photosystem I iron-sulfur center, found in Mastigocladus laminosus (Fischerella sp.).